A 242-amino-acid chain; its full sequence is MLHNPLVQFDIKKLIDIKVMDFDISFTNSAAYMLLASVLALTYFYLAFSNPRLVPSRLQISGEIIYNLVTDMLNQNVGSKGRKFVPVIFTLFVFILFCNLFGMIPYGFTVTSHIIITFALAILVFLMVTIVGFVKHGMHFLSLFLPHGTPLWLAPLMIIIELFTYLARPASLSLRLAANMMAGHILLKVIASFVITLMIYLKFLPIPLMVILIGFEIFVAILQAYIFTILSCVYLNDAVNLH.

A run of 6 helical transmembrane segments spans residues 29–49 (SAAY…LAFS), 84–104 (FVPV…FGMI), 114–134 (IIIT…VGFV), 140–160 (FLSL…MIII), 189–209 (VIAS…IPLM), and 210–230 (VILI…FTIL).

It belongs to the ATPase A chain family. F-type ATPases have 2 components, CF(1) - the catalytic core - and CF(0) - the membrane proton channel. CF(1) has five subunits: alpha(3), beta(3), gamma(1), delta(1), epsilon(1). CF(0) has three main subunits: a(1), b(2) and c(9-12). The alpha and beta chains form an alternating ring which encloses part of the gamma chain. CF(1) is attached to CF(0) by a central stalk formed by the gamma and epsilon chains, while a peripheral stalk is formed by the delta and b chains.

The protein resides in the cell inner membrane. Its function is as follows. Key component of the proton channel; it plays a direct role in the translocation of protons across the membrane. In Rickettsia bellii (strain OSU 85-389), this protein is ATP synthase subunit a.